Here is a 300-residue protein sequence, read N- to C-terminus: Estradiol 17-beta-dehydrogenase 11 (300 aa).

A signal peptide spans 1 to 19; it reads MKFLLDILLLLPLLIVCSL. 40–64 is a binding site for NADP(+); that stretch reads LITGAGHGIGRLTAYEFAKLKSKLV. Residue Ser172 coordinates substrate. Residue Tyr185 is the Proton acceptor of the active site.

The protein belongs to the short-chain dehydrogenases/reductases (SDR) family. 17-beta-HSD 3 subfamily. In terms of tissue distribution, present at high level in steroidogenic cells such as syncytiotrophoblasts, sebaceous gland, Leydig cells, and granulosa cells of the dominant follicle and corpus luteum. In lung, it is detected in the ciliated epithelium and in acini of adult trachea, in bronchioles, but not in alveoli. In the eye, it is detected in the nonpigmented epithelium of the ciliary body and, at lower level, in the inner nuclear layer of the retina (at protein level). Widely expressed. Highly expressed in retina, pancreas, kidney, liver, lung, adrenal, small intestine, ovary and heart.

The protein resides in the endoplasmic reticulum. It is found in the lipid droplet. The catalysed reaction is 17beta-estradiol + NAD(+) = estrone + NADH + H(+). It catalyses the reaction 17beta-estradiol + NADP(+) = estrone + NADPH + H(+). In terms of biological role, can convert androstan-3-alpha,17-beta-diol (3-alpha-diol) to androsterone in vitro, suggesting that it may participate in androgen metabolism during steroidogenesis. May act by metabolizing compounds that stimulate steroid synthesis and/or by generating metabolites that inhibit it. Has no activity toward DHEA (dehydroepiandrosterone), or A-dione (4-androste-3,17-dione), and only a slight activity toward testosterone to A-dione. Tumor-associated antigen in cutaneous T-cell lymphoma. The polypeptide is Estradiol 17-beta-dehydrogenase 11 (HSD17B11) (Homo sapiens (Human)).